The primary structure comprises 372 residues: Trehalose/maltose import ATP-binding protein MalK (372 aa).

The ABC transporter domain occupies 4–240 (VRLVDVWKVF…PANTFVAGFI (237 aa)). ATP is bound at residue 36-43 (GPSGCGKT).

It belongs to the ABC transporter superfamily. Maltose/trehalose importer (TC 3.A.1.1.7) family. In terms of assembly, homodimer. The complex is composed of two ATP-binding proteins (MalK), two transmembrane proteins (MalG and MalF) and a solute-binding protein (MalE).

It is found in the cell membrane. It carries out the reaction D-maltose(out) + ATP + H2O = D-maltose(in) + ADP + phosphate + H(+). Inhibited by N-ethylmaleimide but not by vanadate. Its function is as follows. Part of the ABC transporter complex MalEFGK involved in trehalose/maltose import. Responsible for energy coupling to the transport system. This chain is Trehalose/maltose import ATP-binding protein MalK (malK), found in Thermococcus litoralis (strain ATCC 51850 / DSM 5473 / JCM 8560 / NS-C).